Consider the following 200-residue polypeptide: NADH-quinone oxidoreductase chain 10 (200 aa).

5 helical membrane passes run 2–22 (MTFA…MVVI), 26–46 (PVHS…LFVL), 51–71 (FVAM…FLFV), 90–110 (LPLA…AFSG), and 144–164 (VLMF…AIVL).

This sequence belongs to the complex I subunit 6 family. In terms of assembly, NDH-1 is composed of at least 14 different subunits, Nqo1 to Nqo14. The complex has a L-shaped structure, with the hydrophobic arm (subunits Nqo7, Nqo8, Nqo10 to Nqo14) embedded in the inner membrane and the hydrophilic peripheral arm (subunits Nqo1 to Nqo6, Nqo9) protruding into the bacterial cytoplasm. The hydrophilic domain contains all the redox centers.

It is found in the cell inner membrane. It catalyses the reaction a quinone + NADH + 5 H(+)(in) = a quinol + NAD(+) + 4 H(+)(out). NDH-1 shuttles electrons from NADH, via FMN and iron-sulfur (Fe-S) centers, to quinones in the respiratory chain. The immediate electron acceptor for the enzyme in this species is believed to be ubiquinone. Couples the redox reaction to proton translocation (for every two electrons transferred, four hydrogen ions are translocated across the cytoplasmic membrane), and thus conserves the redox energy in a proton gradient. This is NADH-quinone oxidoreductase chain 10 from Paracoccus denitrificans.